A 158-amino-acid polypeptide reads, in one-letter code: MAARSVSGITRRVFMWTVSGTPCREFWSRFRKEKEPVVVETVEEKKEPILVCPPLRSRAYTPPEDLQSRLESYVKEVFGSSLPSNWQDISLEDSRLKFNLLAHLADDLGHVVPNSRLHQMCRVRDVLDFYNVPIQDRSKFDELSASNLPPNLKITWSY.

The protein belongs to the mitochondrion-specific ribosomal protein mL50 family. As to quaternary structure, component of the mitochondrial large ribosomal subunit (mt-LSU). Mature mammalian 55S mitochondrial ribosomes consist of a small (28S) and a large (39S) subunit. The 28S small subunit contains a 12S ribosomal RNA (12S mt-rRNA) and 30 different proteins. The 39S large subunit contains a 16S rRNA (16S mt-rRNA), a copy of mitochondrial valine transfer RNA (mt-tRNA(Val)), which plays an integral structural role, and 52 different proteins.

Its subcellular location is the mitochondrion. The chain is Large ribosomal subunit protein mL50 (MRPL50) from Homo sapiens (Human).